The primary structure comprises 132 residues: Global transcriptional regulator Spx (132 aa).

Cysteines 10 and 13 form a disulfide.

Belongs to the ArsC family. Spx subfamily. Interacts with the C-terminal domain of the alpha subunit of the RNAP.

It is found in the cytoplasm. Global transcriptional regulator that plays a key role in stress response and exerts either positive or negative regulation of genes. Acts by interacting with the C-terminal domain of the alpha subunit of the RNA polymerase (RNAP). This interaction can enhance binding of RNAP to the promoter region of target genes and stimulate their transcription, or block interaction of RNAP with activator. The chain is Global transcriptional regulator Spx from Lactiplantibacillus plantarum (strain ATCC BAA-793 / NCIMB 8826 / WCFS1) (Lactobacillus plantarum).